Consider the following 1370-residue polypeptide: DNA polymerase II large subunit (1370 aa).

2 disordered regions span residues 279-317 and 1041-1081; these read IGAD…PRAA and AGDA…DGGS.

Belongs to the archaeal DNA polymerase II family. In terms of assembly, heterodimer of a large subunit and a small subunit. In terms of processing, this protein undergoes a protein self splicing that involves a post-translational excision of the intervening region (intein) followed by peptide ligation.

It catalyses the reaction DNA(n) + a 2'-deoxyribonucleoside 5'-triphosphate = DNA(n+1) + diphosphate. The enzyme catalyses Exonucleolytic cleavage in the 3'- to 5'-direction to yield nucleoside 5'-phosphates.. Possesses two activities: a DNA synthesis (polymerase) and an exonucleolytic activity that degrades single-stranded DNA in the 3'- to 5'-direction. Has a template-primer preference which is characteristic of a replicative DNA polymerase. This Halobacterium salinarum (strain ATCC 700922 / JCM 11081 / NRC-1) (Halobacterium halobium) protein is DNA polymerase II large subunit (polC).